We begin with the raw amino-acid sequence, 530 residues long: Ubiquitin carboxyl-terminal hydrolase 17-like protein 17 (530 aa).

The USP domain maps to 80–375 (AGLQNMGNTC…QAYVLFYIQK (296 aa)). Cys-89 acts as the Nucleophile in catalysis. The active-site Proton acceptor is His-334. Basic and acidic residues-rich tracts occupy residues 382–392 (SESVSRGREPR) and 398–411 (DTDR…LKRD). Disordered stretches follow at residues 382 to 411 (SESV…LKRD) and 477 to 530 (NHHP…LVCQ). Polar residues predominate over residues 493–505 (TPTHQESMNTGTL). Residues 510–524 (GRARRSKGKNKHSKR) are compositionally biased toward basic residues.

Belongs to the peptidase C19 family. USP17 subfamily.

It is found in the nucleus. Its subcellular location is the endoplasmic reticulum. It catalyses the reaction Thiol-dependent hydrolysis of ester, thioester, amide, peptide and isopeptide bonds formed by the C-terminal Gly of ubiquitin (a 76-residue protein attached to proteins as an intracellular targeting signal).. Functionally, deubiquitinating enzyme that removes conjugated ubiquitin from specific proteins to regulate different cellular processes that may include cell proliferation, progression through the cell cycle, apoptosis, cell migration, and the cellular response to viral infection. The polypeptide is Ubiquitin carboxyl-terminal hydrolase 17-like protein 17 (USP17L17) (Homo sapiens (Human)).